We begin with the raw amino-acid sequence, 81 residues long: Bursicon (81 aa).

Heterodimer of burs and pburs. Central nervous system. Coexpressed with CCAP in most CCAP-specific neurons. Coexpressed with pburs in the large bilateral lateral neurosecretory neurons of the first three unfused abdominal ganglia and in all anterior bilateral cell pairs in the thoracic ganglia.

It is found in the secreted. Its function is as follows. Final heterodimeric neurohormone released at the end of the molting cycle, involved in the sclerotization (tanning) of the insect cuticle, melanization and wing spreading. This is Bursicon (burs) from Periplaneta americana (American cockroach).